We begin with the raw amino-acid sequence, 385 residues long: 1-deoxy-D-xylulose 5-phosphate reductoisomerase 1 (385 aa).

Positions 11, 12, 13, 14, 39, and 122 each coordinate NADPH. Residue Lys-123 coordinates 1-deoxy-D-xylulose 5-phosphate. Glu-124 provides a ligand contact to NADPH. Asp-148 is a binding site for Mn(2+). Positions 149, 150, 174, and 197 each coordinate 1-deoxy-D-xylulose 5-phosphate. Glu-150 contributes to the Mn(2+) binding site. Gly-203 is an NADPH binding site. The 1-deoxy-D-xylulose 5-phosphate site is built by Ser-210, Asn-215, Lys-216, and Glu-219. Glu-219 provides a ligand contact to Mn(2+).

This sequence belongs to the DXR family. Mg(2+) is required as a cofactor. Mn(2+) serves as cofactor.

The enzyme catalyses 2-C-methyl-D-erythritol 4-phosphate + NADP(+) = 1-deoxy-D-xylulose 5-phosphate + NADPH + H(+). The protein operates within isoprenoid biosynthesis; isopentenyl diphosphate biosynthesis via DXP pathway; isopentenyl diphosphate from 1-deoxy-D-xylulose 5-phosphate: step 1/6. In terms of biological role, catalyzes the NADPH-dependent rearrangement and reduction of 1-deoxy-D-xylulose-5-phosphate (DXP) to 2-C-methyl-D-erythritol 4-phosphate (MEP). This is 1-deoxy-D-xylulose 5-phosphate reductoisomerase 1 from Bacillus anthracis.